The chain runs to 184 residues: dTTP/UTP pyrophosphatase (184 aa).

The active-site Proton acceptor is the Asp-65.

Belongs to the Maf family. YhdE subfamily. The cofactor is a divalent metal cation.

It localises to the cytoplasm. The catalysed reaction is dTTP + H2O = dTMP + diphosphate + H(+). It catalyses the reaction UTP + H2O = UMP + diphosphate + H(+). Its function is as follows. Nucleoside triphosphate pyrophosphatase that hydrolyzes dTTP and UTP. May have a dual role in cell division arrest and in preventing the incorporation of modified nucleotides into cellular nucleic acids. This is dTTP/UTP pyrophosphatase from Thermococcus onnurineus (strain NA1).